The chain runs to 165 residues: MALGLEDKKAIVAEVNEAAKGALSAVVADSRGVTVANMTGLRKAAREAGVYIRVVRNTLVKRAVAGTDFECLSDTFTGPTLIAFSSEHPGAAARLLKDFAKAQEKFEIKAAAFEGELIPAENIDRLAKLPTYEEALAQFMMTLKEASAGKFVRTLAALRDQKEAA.

This sequence belongs to the universal ribosomal protein uL10 family. As to quaternary structure, part of the ribosomal stalk of the 50S ribosomal subunit. The N-terminus interacts with L11 and the large rRNA to form the base of the stalk. The C-terminus forms an elongated spine to which L12 dimers bind in a sequential fashion forming a multimeric L10(L12)X complex.

Forms part of the ribosomal stalk, playing a central role in the interaction of the ribosome with GTP-bound translation factors. This chain is Large ribosomal subunit protein uL10, found in Shewanella pealeana (strain ATCC 700345 / ANG-SQ1).